We begin with the raw amino-acid sequence, 507 residues long: Histidine ammonia-lyase (507 aa).

Positions 141–143 (ASG) form a cross-link, 5-imidazolinone (Ala-Gly). Ser-142 bears the 2,3-didehydroalanine (Ser) mark.

The protein belongs to the PAL/histidase family. In terms of processing, contains an active site 4-methylidene-imidazol-5-one (MIO), which is formed autocatalytically by cyclization and dehydration of residues Ala-Ser-Gly.

It is found in the cytoplasm. It catalyses the reaction L-histidine = trans-urocanate + NH4(+). Its pathway is amino-acid degradation; L-histidine degradation into L-glutamate; N-formimidoyl-L-glutamate from L-histidine: step 1/3. This chain is Histidine ammonia-lyase, found in Burkholderia ambifaria (strain ATCC BAA-244 / DSM 16087 / CCUG 44356 / LMG 19182 / AMMD) (Burkholderia cepacia (strain AMMD)).